Consider the following 140-residue polypeptide: Small ribosomal subunit protein uS12m (140 aa).

A mitochondrion-targeting transit peptide spans 1–30; sequence MNFLRQSFGITKQLASQAIQCSYETAVRGM.

This sequence belongs to the universal ribosomal protein uS12 family.

It is found in the mitochondrion. The polypeptide is Small ribosomal subunit protein uS12m (tko) (Drosophila melanogaster (Fruit fly)).